The sequence spans 417 residues: UDP-N-acetylglucosamine 1-carboxyvinyltransferase (417 aa).

A phosphoenolpyruvate-binding site is contributed by 22–23 (KN). UDP-N-acetyl-alpha-D-glucosamine is bound at residue Arg91. Cys115 functions as the Proton donor in the catalytic mechanism. Cys115 bears the 2-(S-cysteinyl)pyruvic acid O-phosphothioketal mark. UDP-N-acetyl-alpha-D-glucosamine is bound by residues 120 to 124 (RPVDL), Asp304, and Ile326.

It belongs to the EPSP synthase family. MurA subfamily.

The protein resides in the cytoplasm. It catalyses the reaction phosphoenolpyruvate + UDP-N-acetyl-alpha-D-glucosamine = UDP-N-acetyl-3-O-(1-carboxyvinyl)-alpha-D-glucosamine + phosphate. Its pathway is cell wall biogenesis; peptidoglycan biosynthesis. Its function is as follows. Cell wall formation. Adds enolpyruvyl to UDP-N-acetylglucosamine. This chain is UDP-N-acetylglucosamine 1-carboxyvinyltransferase, found in Nitratidesulfovibrio vulgaris (strain ATCC 29579 / DSM 644 / CCUG 34227 / NCIMB 8303 / VKM B-1760 / Hildenborough) (Desulfovibrio vulgaris).